A 596-amino-acid chain; its full sequence is Neuroepithelial cell-transforming gene 1 protein (596 aa).

Methionine 1 is modified (N-acetylmethionine). Residues 1–44 (MEPELAAQKQPRPRRRSRRASGLSTEGATGPSADTSGSELDGRC) are disordered. Residues 1–74 (MEPELAAQKQ…LKRKRREKDD (74 aa)) form a necessary for nuclear localization region. A Nuclear localization signal motif is present at residues 12-19 (RPRRRSRR). Phosphoserine is present on residues serine 21 and serine 32. Positions 22-38 (GLSTEGATGPSADTSGS) are enriched in polar residues. The Nuclear localization signal motif lies at 66-72 (KRKRREK). Phosphoserine is present on residues serine 100, serine 106, and serine 122. A disordered region spans residues 127–146 (GDHRSPASAQKFSSRSTVPT). The segment covering 133-145 (ASAQKFSSRSTVP) has biased composition (polar residues). The 183-residue stretch at 174–356 (RRQEAIYEMS…QGVLSDINLK (183 aa)) folds into the DH domain. The PH domain maps to 386–501 (VLLCHGELRS…WFNCIRAAIA (116 aa)). The residue at position 508 (serine 508) is a Phosphoserine. The tract at residues 562–596 (MAEDSKSLKTHQTQPGIRRARDKALSGGKRKETLV) is disordered.

In terms of assembly, interacts with RHOA in its GTP- and GDP-bound states, and with CDC42 in its GTP-bound state. Interacts with the PDZ 1 domain of BAIAP1. In terms of tissue distribution, widely expressed.

It localises to the cytoplasm. The protein localises to the nucleus. Functionally, acts as a guanine nucleotide exchange factor (GEF) for RhoA GTPase. May be involved in activation of the SAPK/JNK pathway Stimulates genotoxic stress-induced RHOB activity in breast cancer cells leading to their cell death. The polypeptide is Neuroepithelial cell-transforming gene 1 protein (NET1) (Homo sapiens (Human)).